A 205-amino-acid polypeptide reads, in one-letter code: tRNA 2-(methylsulfanyl)-N(6)-isopentenyladenosine(37) hydroxylase (205 aa).

Fe cation is bound by residues Glu-38, Glu-69, His-72, Glu-122, Glu-151, and His-154.

This sequence belongs to the MiaE family. In terms of assembly, homodimer. The cofactor is Fe cation.

The catalysed reaction is 2-methylsulfanyl-N(6)-dimethylallyladenosine(37) in tRNA + AH2 + O2 = N(6)-[(2E)-4-hydroxy-3-methylbut-2-en-1-yl]-2-(methylsulfanyl)adenosine(37) in tRNA + A + H2O. Its pathway is tRNA modification; 2-methylthio-N-6-(cis-hydroxy)isopentenyl adenosine-tRNA biosynthesis. Its function is as follows. Involved in specific tRNA modification. Catalyzes the oxygen-dependent hydroxylation of 2-methylthio-N-6-isopentenyl adenosine (ms2i6A) to produce 2-methylthio-N-6-(cis-hydroxy)isopentenyl adenosine (ms2io6A) at position 37 in tRNAs. This chain is tRNA 2-(methylsulfanyl)-N(6)-isopentenyladenosine(37) hydroxylase, found in Pseudomonas putida (strain ATCC 47054 / DSM 6125 / CFBP 8728 / NCIMB 11950 / KT2440).